Reading from the N-terminus, the 688-residue chain is Glycine--tRNA ligase beta subunit (688 aa).

Belongs to the class-II aminoacyl-tRNA synthetase family. Tetramer of two alpha and two beta subunits.

It localises to the cytoplasm. The catalysed reaction is tRNA(Gly) + glycine + ATP = glycyl-tRNA(Gly) + AMP + diphosphate. In Psychromonas ingrahamii (strain DSM 17664 / CCUG 51855 / 37), this protein is Glycine--tRNA ligase beta subunit.